The following is a 381-amino-acid chain: Chaperone protein DnaJ (381 aa).

In terms of domain architecture, J spans 5 to 69 (DYYEVLGVSK…EKRARYDRFG (65 aa)). Residues 136-218 (GKETEIEVPH…CGGTGHVKKR (83 aa)) form a CR-type zinc finger. Cys149, Cys152, Cys166, Cys169, Cys192, Cys195, Cys206, and Cys209 together coordinate Zn(2+). CXXCXGXG motif repeat units follow at residues 149 to 156 (CDTCHGSG), 166 to 173 (CPHCHGSG), 192 to 199 (CPVCGGTG), and 206 to 213 (CPTCGGTG). Residues 154 to 174 (GSGAKPGTSPQSCPHCHGSGQ) form a disordered region.

The protein belongs to the DnaJ family. As to quaternary structure, homodimer. It depends on Zn(2+) as a cofactor.

It is found in the cytoplasm. In terms of biological role, participates actively in the response to hyperosmotic and heat shock by preventing the aggregation of stress-denatured proteins and by disaggregating proteins, also in an autonomous, DnaK-independent fashion. Unfolded proteins bind initially to DnaJ; upon interaction with the DnaJ-bound protein, DnaK hydrolyzes its bound ATP, resulting in the formation of a stable complex. GrpE releases ADP from DnaK; ATP binding to DnaK triggers the release of the substrate protein, thus completing the reaction cycle. Several rounds of ATP-dependent interactions between DnaJ, DnaK and GrpE are required for fully efficient folding. Also involved, together with DnaK and GrpE, in the DNA replication of plasmids through activation of initiation proteins. The sequence is that of Chaperone protein DnaJ from Geobacillus thermodenitrificans (strain NG80-2).